A 434-amino-acid polypeptide reads, in one-letter code: UDP-glucose 6-dehydrogenase (434 aa).

NAD(+) is bound by residues 2–19, Val11, Asp30, Lys35, Thr121, and Glu152; that span reads NITF…GIIM. Residues 148–152, Lys204, Asn208, 249–253, and Gly257 each bind substrate; these read EFLRE and FLNAG. Cys260 functions as the Nucleophile in the catalytic mechanism. Lys263 serves as a coordination point for NAD(+). Lys321 contributes to the substrate binding site. Residue Arg328 coordinates NAD(+).

This sequence belongs to the UDP-glucose/GDP-mannose dehydrogenase family.

The catalysed reaction is UDP-alpha-D-glucose + 2 NAD(+) + H2O = UDP-alpha-D-glucuronate + 2 NADH + 3 H(+). It functions in the pathway nucleotide-sugar biosynthesis; UDP-alpha-D-glucuronate biosynthesis; UDP-alpha-D-glucuronate from UDP-alpha-D-glucose: step 1/1. In Rickettsia prowazekii (strain Madrid E), this protein is UDP-glucose 6-dehydrogenase (udg).